A 341-amino-acid polypeptide reads, in one-letter code: Aspartate carbamoyltransferase catalytic subunit (341 aa).

Carbamoyl phosphate-binding residues include R89 and T90. K117 lines the L-aspartate pocket. R139, H169, and Q172 together coordinate carbamoyl phosphate. Residues R202 and R257 each coordinate L-aspartate. Positions 298 and 299 each coordinate carbamoyl phosphate.

It belongs to the aspartate/ornithine carbamoyltransferase superfamily. ATCase family. Heterododecamer (2C3:3R2) of six catalytic PyrB chains organized as two trimers (C3), and six regulatory PyrI chains organized as three dimers (R2).

It catalyses the reaction carbamoyl phosphate + L-aspartate = N-carbamoyl-L-aspartate + phosphate + H(+). The protein operates within pyrimidine metabolism; UMP biosynthesis via de novo pathway; (S)-dihydroorotate from bicarbonate: step 2/3. Functionally, catalyzes the condensation of carbamoyl phosphate and aspartate to form carbamoyl aspartate and inorganic phosphate, the committed step in the de novo pyrimidine nucleotide biosynthesis pathway. The sequence is that of Aspartate carbamoyltransferase catalytic subunit from Paraburkholderia phytofirmans (strain DSM 17436 / LMG 22146 / PsJN) (Burkholderia phytofirmans).